A 35-amino-acid chain; its full sequence is GFGCPNDYPCHRHCKSIPGRYGGYCGGXHRLRCTC.

3 cysteine pairs are disulfide-bonded: C4-C25, C10-C33, and C14-C35.

It is found in the secreted. Its function is as follows. Has antibacterial activity against M.luteus and E.coli. The protein is Defensin-B of Mytilus edulis (Blue mussel).